The chain runs to 428 residues: tRNA modification GTPase MnmE (428 aa).

Residues Arg-20, Glu-77, and Lys-117 each coordinate (6S)-5-formyl-5,6,7,8-tetrahydrofolate. In terms of domain architecture, TrmE-type G spans 213 to 351; that stretch reads GFEVAIIGPP…LVQRISDVLK (139 aa). K(+) is bound at residue Asn-223. Residues 223–228, 242–248, and 267–270 contribute to the GTP site; these read NAGKST, SEVAGTT, and DTAG. Ser-227 serves as a coordination point for Mg(2+). The K(+) site is built by Ser-242, Val-244, and Thr-247. Position 248 (Thr-248) interacts with Mg(2+). Lys-428 contributes to the (6S)-5-formyl-5,6,7,8-tetrahydrofolate binding site.

This sequence belongs to the TRAFAC class TrmE-Era-EngA-EngB-Septin-like GTPase superfamily. TrmE GTPase family. Homodimer. Heterotetramer of two MnmE and two MnmG subunits. It depends on K(+) as a cofactor.

The protein resides in the cytoplasm. In terms of biological role, exhibits a very high intrinsic GTPase hydrolysis rate. Involved in the addition of a carboxymethylaminomethyl (cmnm) group at the wobble position (U34) of certain tRNAs, forming tRNA-cmnm(5)s(2)U34. The chain is tRNA modification GTPase MnmE from Ruegeria pomeroyi (strain ATCC 700808 / DSM 15171 / DSS-3) (Silicibacter pomeroyi).